The sequence spans 205 residues: Ribosomal RNA small subunit methyltransferase G (205 aa).

Residues G76, L81, 127–128 (IE), and R140 contribute to the S-adenosyl-L-methionine site.

It belongs to the methyltransferase superfamily. RNA methyltransferase RsmG family.

The protein localises to the cytoplasm. It catalyses the reaction guanosine(527) in 16S rRNA + S-adenosyl-L-methionine = N(7)-methylguanosine(527) in 16S rRNA + S-adenosyl-L-homocysteine. Specifically methylates the N7 position of guanine in position 527 of 16S rRNA. The sequence is that of Ribosomal RNA small subunit methyltransferase G from Francisella tularensis subsp. tularensis (strain WY96-3418).